The chain runs to 240 residues: CD302 antigen (240 aa).

Residues 40–160 (FQDSCYIFLQ…CEVSSVEGTL (121 aa)) form the C-type lectin domain. Asn117 is a glycosylation site (N-linked (GlcNAc...) asparagine). Cys136 and Cys151 form a disulfide bridge. Residues 177–197 (ILISALVIASTVILTVLGAVI) traverse the membrane as a helical segment. At 198–240 (WFLYKRNLDSGFTTVFSTAPQSPFNDDCVLVVAEENEYAVQFD) the chain is on the cytoplasmic side.

Its subcellular location is the membrane. The protein resides in the cell projection. The protein localises to the filopodium. It is found in the cytoplasm. It localises to the cell cortex. In terms of biological role, potential multifunctional C-type lectin receptor that may play roles in endocytosis and phagocytosis as well as in cell adhesion and migration. The chain is CD302 antigen from Sus scrofa (Pig).